The chain runs to 1236 residues: Complement factor H (1236 aa).

Residues 1–18 (MRFPAKIVWLVLWTVCVA) form the signal peptide. 20 Sushi domains span residues 19 to 82 (EDCK…ICRK), 83 to 143 (KPCA…ICEV), 144 to 207 (VKCL…KCVE), 208 to 264 (IFCK…TCIE), 265 to 322 (ITCD…RCAW), 325 to 383 (CSYP…EEPC), 385 to 442 (RQCI…RCIR), 444 to 505 (KTCS…VCIK), 507 to 562 (CDRP…KAAC), 565 to 623 (RECS…TCKV), 627 to 685 (KSCA…VCIE), 688 to 745 (RTCG…QCIA), 750 to 804 (RKCK…DCNE), 809 to 866 (QLCP…RCIE), 868 to 936 (IGCS…QCVG), 937 to 994 (LPCG…DCIS), 995 to 1053 (TNCV…ACRD), 1054 to 1111 (VSCG…QCKD), 1114 to 1172 (GKCG…KCLE), and 1173 to 1235 (ACVI…YPRC). Cystine bridges form between Cys21/Cys66, Cys52/Cys80, Cys85/Cys129, Cys114/Cys141, Cys146/Cys192, Cys178/Cys205, Cys210/Cys251, Cys237/Cys262, Cys267/Cys309, Cys294/Cys320, Cys325/Cys372, Cys355/Cys383, Cys387/Cys429, Cys414/Cys440, Cys446/Cys492, Cys475/Cys503, Cys507/Cys551, Cys534/Cys562, Cys567/Cys609, Cys595/Cys621, Cys629/Cys672, Cys658/Cys683, Cys690/Cys732, Cys718/Cys743, Cys752/Cys791, Cys780/Cys802, Cys811/Cys853, Cys839/Cys864, Cys870/Cys923, Cys909/Cys934, Cys939/Cys981, Cys967/Cys992, Cys997/Cys1040, Cys1026/Cys1051, Cys1056/Cys1098, Cys1084/Cys1109, Cys1116/Cys1159, Cys1145/Cys1170, Cys1174/Cys1225, and Cys1208/Cys1235. Tyr168 and Tyr170 each carry sulfotyrosine. A sulfotyrosine mark is found at Tyr465 and Tyr473. Residues Tyr575, Tyr579, and Tyr585 each carry the sulfotyrosine modification. N-linked (GlcNAc...) asparagine glycosylation occurs at Asn775. N-linked (GlcNAc...) asparagine glycosylation is present at Asn1100.

As to quaternary structure, homodimer. Also forms homooligomers. Interacts with complement protein C3b; this interaction inhibits complement activation. Interacts with complement protein C3d. Interacts with CR3/ITGAM; this interaction mediates adhesion of neutrophils to pathogens leading to pathogen clearance. Sulfated on tyrosine residues. In terms of tissue distribution, CFH is one of the most abundant complement components in blood where the liver is the major source of CFH protein in vivo. in addition, CFH is secreted by additional cell types including monocytes, fibroblasts, or endothelial cells.

Its subcellular location is the secreted. Its function is as follows. Glycoprotein that plays an essential role in maintaining a well-balanced immune response by modulating complement activation. Acts as a soluble inhibitor of complement, where its binding to self markers such as glycan structures prevents complement activation and amplification on cell surfaces. Accelerates the decay of the complement alternative pathway (AP) C3 convertase C3bBb, thus preventing local formation of more C3b, the central player of the complement amplification loop. As a cofactor of the serine protease factor I, CFH also regulates proteolytic degradation of already-deposited C3b. In addition, mediates several cellular responses through interaction with specific receptors. For example, interacts with CR3/ITGAM receptor and thereby mediates the adhesion of human neutrophils to different pathogens. In turn, these pathogens are phagocytosed and destroyed. The sequence is that of Complement factor H (CFH) from Bos taurus (Bovine).